The primary structure comprises 97 residues: Mitochondrial import inner membrane translocase subunit Tim8 A (97 aa).

The Twin CX3C motif signature appears at 43 to 66 (CWEKCMDKPGPKLDSRAEACFVNC). Disulfide bonds link Cys-43-Cys-66 and Cys-47-Cys-62. A phosphoserine mark is found at Ser-57, Ser-87, Ser-94, and Ser-96.

This sequence belongs to the small Tim family. In terms of assembly, heterohexamer; composed of 3 copies of TIMM8A and 3 copies of TIMM13, named soluble 70 kDa complex. Associates with the TIM22 complex, whose core is composed of TIMM22. Highly expressed in fetal and adult brain, followed by fetal lung, liver and kidney. Also expressed in heart, placenta, lung, liver, kidney, pancreas, skeletal muscle and heart.

It is found in the mitochondrion inner membrane. Mitochondrial intermembrane chaperone that participates in the import and insertion of some multi-pass transmembrane proteins into the mitochondrial inner membrane. Also required for the transfer of beta-barrel precursors from the TOM complex to the sorting and assembly machinery (SAM complex) of the outer membrane. Acts as a chaperone-like protein that protects the hydrophobic precursors from aggregation and guide them through the mitochondrial intermembrane space. The TIMM8-TIMM13 complex mediates the import of proteins such as TIMM23, SLC25A12/ARALAR1 and SLC25A13/ARALAR2, while the predominant TIMM9-TIMM10 70 kDa complex mediates the import of much more proteins. Probably necessary for normal neurologic development. In Homo sapiens (Human), this protein is Mitochondrial import inner membrane translocase subunit Tim8 A (TIMM8A).